A 66-amino-acid polypeptide reads, in one-letter code: Beta-mammal toxin Cv3 (66 aa).

An LCN-type CS-alpha/beta domain is found at 1–66 (KEGYIVNYYD…VWPLPNKTCN (66 aa)). 4 disulfide bridges follow: Cys-12/Cys-65, Cys-16/Cys-41, Cys-25/Cys-46, and Cys-29/Cys-48.

Expressed by the venom gland.

The protein resides in the secreted. Functionally, beta toxins bind voltage-independently at site-4 of sodium channels (Nav) and reduces peak current and shifts the voltage of activation toward more negative potentials thereby affecting sodium channel activation and promoting spontaneous and repetitive firing. This toxin is strongly toxic to mice. This chain is Beta-mammal toxin Cv3, found in Centruroides villegasi (Scorpion).